Reading from the N-terminus, the 96-residue chain is Cell division topological specificity factor (96 aa).

It belongs to the MinE family.

In terms of biological role, prevents the cell division inhibition by proteins MinC and MinD at internal division sites while permitting inhibition at polar sites. This ensures cell division at the proper site by restricting the formation of a division septum at the midpoint of the long axis of the cell. This Nitrosococcus oceani (strain ATCC 19707 / BCRC 17464 / JCM 30415 / NCIMB 11848 / C-107) protein is Cell division topological specificity factor.